Consider the following 410-residue polypeptide: Argininosuccinate synthase (410 aa).

Residues 10–18 (AYSGGLDTS) and Ala37 each bind ATP. Tyr90 and Ser95 together coordinate L-citrulline. ATP is bound at residue Gly120. L-aspartate contacts are provided by Thr122, Asn126, and Asp127. Asn126 lines the L-citrulline pocket. Residues Arg130, Ser182, Ser191, Glu267, and Tyr279 each coordinate L-citrulline.

The protein belongs to the argininosuccinate synthase family. Type 1 subfamily. In terms of assembly, homotetramer.

The protein localises to the cytoplasm. The catalysed reaction is L-citrulline + L-aspartate + ATP = 2-(N(omega)-L-arginino)succinate + AMP + diphosphate + H(+). The protein operates within amino-acid biosynthesis; L-arginine biosynthesis; L-arginine from L-ornithine and carbamoyl phosphate: step 2/3. The polypeptide is Argininosuccinate synthase (Polynucleobacter necessarius subsp. necessarius (strain STIR1)).